The chain runs to 827 residues: ADP-ribosylation factor GTPase-activating protein AGD3 (827 aa).

The BAR domain maps to Met-1–Gln-225. 2 coiled-coil regions span residues His-116–Phe-139 and Ala-223–Arg-253. The segment at Arg-246–Gln-269 is disordered. Over residues Gly-255–Gly-267 the composition is skewed to low complexity. Residues Gln-292–Ala-430 enclose the PH domain. The tract at residues Glu-439–Asp-467 is disordered. Phosphoserine is present on Ser-445. In terms of domain architecture, Arf-GAP spans Glu-501–Asp-643. The C4-type zinc-finger motif lies at Cys-516–Cys-539. ANK repeat units follow at residues Gly-728–Ala-757, Ser-761–Ala-790, and Glu-794–Arg-825.

In terms of assembly, homodimer. Interacts with DRP1A. Interacts with VAB. In terms of tissue distribution, broadly expressed. Detected in developing veins of the leaf and root. Detected in roots, hypocotyls, cotyledons, leaves, siliques and shoot apical meristems.

It is found in the golgi apparatus. The protein localises to the trans-Golgi network. Its activity is regulated as follows. ARF GAP activity strongly enhanced by phosphatidylinositol 4-monophosphate (PIP) and moderately enhanced by phosphatidylinositol 4,5-bisphosphate (PIP2). GTPase-activating protein (GAP) for ADP ribosylation factor (ARF). Involved in the spatial control of provascular differentiation. Required for the formation of the normal pattern of continuous secondary veins. Involved in auxin signaling but not in polar auxin transport or in auxin responses. Required for PIN1 internalization in roots. The sequence is that of ADP-ribosylation factor GTPase-activating protein AGD3 (AGD3) from Arabidopsis thaliana (Mouse-ear cress).